Consider the following 619-residue polypeptide: Guanylate cyclase soluble subunit beta-1 (619 aa).

Histidine 105 is a binding site for heme. The Guanylate cyclase domain occupies 421–554 (TILFSGIVGF…NTVNLTSRTE (134 aa)).

The protein belongs to the adenylyl cyclase class-4/guanylyl cyclase family. The active enzyme is formed by a heterodimer of an alpha and a beta subunit. Homotetramer; dimer of dimers (in vitro). Heterodimer with GUCY1A1. Can also form inactive homodimers in vitro. Requires heme as cofactor. In terms of tissue distribution, lung and brain.

The protein localises to the cytoplasm. The catalysed reaction is GTP = 3',5'-cyclic GMP + diphosphate. With respect to regulation, activated by nitric oxide in the presence of magnesium or manganese ions. Mediates responses to nitric oxide (NO) by catalyzing the biosynthesis of the signaling molecule cGMP. In Rattus norvegicus (Rat), this protein is Guanylate cyclase soluble subunit beta-1 (Gucy1b1).